Reading from the N-terminus, the 401-residue chain is Patatin-like protein 4 (401 aa).

One can recognise a PNPLA domain in the interval 17–218 (LSLDGGGVRG…TANDPTLVGM (202 aa)). Residues 21–26 (GGGVRG) carry the GXGXXG motif. Positions 60-64 (GTSTG) match the GXSXG motif. The active-site Nucleophile is Ser-62. Asp-205 (proton acceptor) is an active-site residue. The DGA/G signature appears at 205-207 (DGG).

Belongs to the patatin family.

In terms of biological role, possesses non-specific lipolytic acyl hydrolase (LAH) activity. Hydrolyzes phospholipids as well as galactolipids. May play a role in disease resistance. This chain is Patatin-like protein 4 (PLP4), found in Arabidopsis thaliana (Mouse-ear cress).